The following is a 93-amino-acid chain: MSFLNFAFSPVFFSIMACYFIVWRNKRNEFVCNRLLSIIIISFLICFIYPWLNYKIEVKYYIFEQFYLFCFLSSLVAVVINLIVYFILYRRCI.

3 helical membrane passes run 3 to 23 (FLNF…FIVW), 36 to 56 (LSII…NYKI), and 68 to 88 (LFCF…YFIL).

Belongs to the MceB microcin immunity protein family.

Its subcellular location is the cell inner membrane. Its function is as follows. Probably able to protect the producing cell against microcin N (microcin 24). The protein is Microcin N immunity protein of Escherichia coli.